Reading from the N-terminus, the 557-residue chain is MAAQGFLLIATFLLVLMVLARPLGSGLARLINDIPLPGTAGVERILFRLPGVSDHEMNWKQYLCAILGLNMLGLAVLFFMLLGQHYLPLNPQQLPGLSWDLALNTAVSFVTNTNWQSYSGETTLSYFSQMAGLTVQNFLSAASGIAVIFALIRAFTRQSMSTLGNAWVDLLRITLWVLVPVALLIALFFIQQGALQNFQPYQAVNTVEGAQQLLPMGPVASQEAIKMLGTNGGGFFNANSSHPFENPTALTNFVQMLAIFLIPTALCFAFGEVTGDRRQGRMLLWAMSVIFVICVGVVMWAEVQGNPHLLALGADSSINMEGKESRFGVLVSSLFAVVTTAASCGAVIAMHDSFTALGGMVPMWLMQIGEVVFGGVGSGLYGMMLFVLLAVFIAGLMIGRTPEYLGKKIDVREMKLTALAILVTPTLVLMGAALAMMTDAGRSAMLNPGPHGFSEVLYAVSSAANNNGSAFAGLSANSPFWNCLLAFCMFVGRFGVIIPVMAIAGSLVSKKSQPASSGTLPTHGPLFVGLLIGTVLLVGALTFIPALALGPVAEYLS.

12 helical membrane-spanning segments follow: residues 5–25 (GFLLIATFLLVLMVLARPLGS), 63–83 (LCAILGLNMLGLAVLFFMLLG), 132–152 (GLTVQNFLSAASGIAVIFALI), 170–190 (LLRITLWVLVPVALLIALFFI), 253–273 (FVQMLAIFLIPTALCFAFGEV), 283–303 (LLWAMSVIFVICVGVVMWAEV), 329–349 (VLVSSLFAVVTTAASCGAVIA), 356–376 (ALGGMVPMWLMQIGEVVFGGV), 379–399 (GLYGMMLFVLLAVFIAGLMIG), 416–436 (LTALAILVTPTLVLMGAALAM), 484–504 (LLAFCMFVGRFGVIIPVMAIA), and 526–546 (LFVGLLIGTVLLVGALTFIPA).

Belongs to the KdpA family. In terms of assembly, the system is composed of three essential subunits: KdpA, KdpB and KdpC.

The protein resides in the cell inner membrane. Functionally, part of the high-affinity ATP-driven potassium transport (or Kdp) system, which catalyzes the hydrolysis of ATP coupled with the electrogenic transport of potassium into the cytoplasm. This subunit binds the periplasmic potassium ions and delivers the ions to the membrane domain of KdpB through an intramembrane tunnel. This Escherichia coli O139:H28 (strain E24377A / ETEC) protein is Potassium-transporting ATPase potassium-binding subunit.